Reading from the N-terminus, the 259-residue chain is Ras-related protein Rab-34 (259 aa).

The residue at position 1 (Met-1) is an N-acetylmethionine. Ser-62, Val-63, Gly-64, Lys-65, Thr-66, Asp-78, Tyr-81, and Thr-84 together coordinate GTP. Thr-66 contacts Mg(2+). The short motif at 71 to 89 (RFCKDTFDKNYKATIGVDF) is the Switch 1 element. Residues Thr-84 and Asp-107 each coordinate Mg(2+). The Switch 2 signature appears at 108–127 (TAGQERFKCIASTYYRGAQA). 4 residues coordinate GTP: Gly-110, Lys-167, Asp-169, and Ser-198. Ser-241 carries the post-translational modification Phosphoserine. S-geranylgeranyl cysteine attachment occurs at residues Cys-257 and Cys-258.

It belongs to the small GTPase superfamily. Rab family. In terms of assembly, interacts with RILP. The GTP-bound form interacts with REP15. It depends on Mg(2+) as a cofactor.

Its subcellular location is the cytoplasm. It localises to the golgi apparatus. The protein localises to the cytoplasmic vesicle. It is found in the phagosome. The protein resides in the phagosome membrane. Its subcellular location is the cell projection. It localises to the cilium. The protein localises to the cytoskeleton. It is found in the microtubule organizing center. The protein resides in the centrosome. Its subcellular location is the centriole. It carries out the reaction GTP + H2O = GDP + phosphate + H(+). Regulated by guanine nucleotide exchange factors (GEFs) which promote the exchange of bound GDP for free GTP. Regulated by GTPase activating proteins (GAPs) which increase the GTP hydrolysis activity. Inhibited by GDP dissociation inhibitors (GDIs). In terms of biological role, the small GTPases Rab are key regulators of intracellular membrane trafficking, from the formation of transport vesicles to their fusion with membranes. Rabs cycle between an inactive GDP-bound form and an active GTP-bound form that is able to recruit to membranes different sets of downstream effectors directly responsible for vesicle formation, movement, tethering and fusion. RAB34 transports protein involved in the redistribution of lysosomes to the peri-Golgi region. Plays a role in the maturation of phagosomes that engulf pathogens, such as S.aureus and M.tuberculosis. Plays a role in the fusion of phagosomes with lysosomes. Required for the early steps of intracellular ciliogenesis, the cilium assembly pathway initiated by trafficking and docking of ciliary vesicles to the centrioles in the cytoplasm, followed by axoneme formation in the cytoplasm. After axoneme elongation, the centrioles migrate close to the cell surface so that ciliary vesicles can fuse with the plasma membrane to expose cilia to the extracellular space. It seems dispensable for ciliogenesis via the extracellular pathway where cilium assembly begins after migration and docking of the centriole to the plasma membrane. Also acts as a positive regulator of hedgehog signaling and regulates ciliary function. The protein is Ras-related protein Rab-34 of Mus musculus (Mouse).